Reading from the N-terminus, the 123-residue chain is Gamma-synuclein (123 aa).

A run of 2 repeats spans residues 20 to 30 (EKTKQGVTEAA) and 31 to 41 (EKTKEGVMYVG). The 4 X 11 AA tandem repeats of [EGSA]-K-T-K-[EQ]-[GQ]-V-X(4) stretch occupies residues 20–67 (EKTKQGVTEAAEKTKEGVMYVGTKTKENVVQSVTSVAEKTKEQANAVS). The 3; approximate repeat unit spans residues 42-56 (TKTKENVVQSVTSVA). The stretch at 57–67 (EKTKEQANAVS) is repeat 4. Ser-67 and Ser-72 each carry phosphoserine. A disordered region spans residues 91 to 123 (TTGVVRKEDLEPPAQDQEAKEQEENEEAKSGED). The segment covering 107-123 (QEAKEQEENEEAKSGED) has biased composition (basic and acidic residues). The residue at position 120 (Ser-120) is a Phosphoserine; by BARK1, CaMK2 and CK2.

This sequence belongs to the synuclein family. As to quaternary structure, may be a centrosome-associated protein. Interacts with MYOC; affects its secretion and its aggregation. In terms of processing, phosphorylated. Phosphorylation by GRK5 appears to occur on residues distinct from the residue phosphorylated by other kinases. In terms of tissue distribution, highly expressed in brain, particularly in the substantia nigra. Also expressed in the corpus callosum, heart, skeletal muscle, ovary, testis, colon and spleen. Weak expression in pancreas, kidney and lung. Expressed predominantly in the cell bodies and axons of primary sensory neurons, sympathetic neurons and motoneurons.

It localises to the cytoplasm. The protein resides in the perinuclear region. Its subcellular location is the cytoskeleton. The protein localises to the microtubule organizing center. It is found in the centrosome. It localises to the spindle. In terms of biological role, plays a role in neurofilament network integrity. May be involved in modulating axonal architecture during development and in the adult. In vitro, increases the susceptibility of neurofilament-H to calcium-dependent proteases. May also function in modulating the keratin network in skin. Activates the MAPK and Elk-1 signal transduction pathway. The sequence is that of Gamma-synuclein (Sncg) from Mus musculus (Mouse).